Here is a 307-residue protein sequence, read N- to C-terminus: MKHIISPLDLSLSELSDVLNLAEKIIVDPKQYSECCQGKKLATLFYEPSTRTRLSFEAAMLNLGGSVLGFSSADSSSAAKGESVADTIRVISSYADICAMRHPKEGAPLVASTYSSIPVINAGDGGHNHPTQTLTDLLTIKNLKGRLDNLTIGFCGDLKFGRTVHSLINAMVRYEGIKFVLISPEELKIPAYLREEVLDRGNIPYEEVKNLEAVMPELDILYMTRVQKERFFNEEDYIRLKDSFILDAKKMEGAKEDMLVLHPLPRVNEIATEIDNDPRAVYFKQAEFGVYARMALIMLLLNVVPQE.

Residues arginine 51 and threonine 52 each contribute to the carbamoyl phosphate site. Lysine 80 serves as a coordination point for L-aspartate. Carbamoyl phosphate is bound by residues arginine 101, histidine 129, and glutamine 132. L-aspartate-binding residues include arginine 162 and arginine 225. Carbamoyl phosphate is bound by residues leucine 264 and proline 265.

Belongs to the aspartate/ornithine carbamoyltransferase superfamily. ATCase family. As to quaternary structure, heterododecamer (2C3:3R2) of six catalytic PyrB chains organized as two trimers (C3), and six regulatory PyrI chains organized as three dimers (R2).

The enzyme catalyses carbamoyl phosphate + L-aspartate = N-carbamoyl-L-aspartate + phosphate + H(+). Its pathway is pyrimidine metabolism; UMP biosynthesis via de novo pathway; (S)-dihydroorotate from bicarbonate: step 2/3. Catalyzes the condensation of carbamoyl phosphate and aspartate to form carbamoyl aspartate and inorganic phosphate, the committed step in the de novo pyrimidine nucleotide biosynthesis pathway. The sequence is that of Aspartate carbamoyltransferase catalytic subunit from Lachnoclostridium phytofermentans (strain ATCC 700394 / DSM 18823 / ISDg) (Clostridium phytofermentans).